Reading from the N-terminus, the 291-residue chain is U7 snRNA-associated Sm-like protein LSm11 (291 aa).

The disordered stretch occupies residues 55–84 (ARGRARGAQRGQSRGPGGKRKGRKPEPDPE). The Sm domain maps to 124-199 (SPLGELNRCV…LTLTRLFDRL (76 aa)). Positions 155 to 289 (GFIVAFDKFW…RGENVLLVHI (135 aa)) are SM. The interval 203–266 (EPGSHDPAKG…RRNRKEKVDY (64 aa)) is disordered. Over residues 251 to 261 (NRPKQRRRNRK) the composition is skewed to basic residues.

This sequence belongs to the snRNP Sm proteins family. Component of the heptameric ring U7 snRNP complex.

It localises to the nucleus. Component of the U7 snRNP complex that is involved in the histone 3'-end pre-mRNA processing. Increases U7 snRNA levels but not histone 3'-end pre-mRNA processing activity, when overexpressed. Binds specifically to the Sm-binding site of U7 snRNA. The polypeptide is U7 snRNA-associated Sm-like protein LSm11 (Xenopus laevis (African clawed frog)).